A 90-amino-acid polypeptide reads, in one-letter code: Small ribosomal subunit protein uS15c (90 aa).

The protein belongs to the universal ribosomal protein uS15 family. As to quaternary structure, part of the 30S ribosomal subunit.

The protein localises to the plastid. The protein resides in the chloroplast. The chain is Small ribosomal subunit protein uS15c (rps15) from Platanus occidentalis (Sycamore).